A 160-amino-acid polypeptide reads, in one-letter code: MSWSRVIAYGLLPGLALALTCGAGLLKWQDGAVRDAAVARAESVRAATDGTTALLSYRPDTVQHDLESARSRLTGTFLDAYTQLTHDVVIPGAQQKQISAVATVAAAASVSTSADRAVVLLFVNQTITVGKDAPTTAASSVRVTLDNINGRWLISQFEPI.

The signal sequence occupies residues 1 to 22 (MSWSRVIAYGLLPGLALALTCG).

Its subcellular location is the cell outer membrane. The chain is Outer membrane protein MT2024.1 from Mycobacterium tuberculosis (strain CDC 1551 / Oshkosh).